The primary structure comprises 162 residues: 2-C-methyl-D-erythritol 2,4-cyclodiphosphate synthase (162 aa).

2 residues coordinate a divalent metal cation: Asp-12 and His-14. 4-CDP-2-C-methyl-D-erythritol 2-phosphate is bound by residues 12–14 (DVH) and 38–39 (HS). His-46 contributes to the a divalent metal cation binding site. 4-CDP-2-C-methyl-D-erythritol 2-phosphate-binding positions include 60 to 62 (DIG), 136 to 139 (TTTE), Phe-143, and Arg-146.

Belongs to the IspF family. Homotrimer. A divalent metal cation is required as a cofactor.

It carries out the reaction 4-CDP-2-C-methyl-D-erythritol 2-phosphate = 2-C-methyl-D-erythritol 2,4-cyclic diphosphate + CMP. Its pathway is isoprenoid biosynthesis; isopentenyl diphosphate biosynthesis via DXP pathway; isopentenyl diphosphate from 1-deoxy-D-xylulose 5-phosphate: step 4/6. In terms of biological role, involved in the biosynthesis of isopentenyl diphosphate (IPP) and dimethylallyl diphosphate (DMAPP), two major building blocks of isoprenoid compounds. Catalyzes the conversion of 4-diphosphocytidyl-2-C-methyl-D-erythritol 2-phosphate (CDP-ME2P) to 2-C-methyl-D-erythritol 2,4-cyclodiphosphate (ME-CPP) with a corresponding release of cytidine 5-monophosphate (CMP). In Porphyromonas gingivalis (strain ATCC 33277 / DSM 20709 / CIP 103683 / JCM 12257 / NCTC 11834 / 2561), this protein is 2-C-methyl-D-erythritol 2,4-cyclodiphosphate synthase.